The sequence spans 471 residues: Casein kinase 1-like protein 9 (471 aa).

The region spanning 9 to 278 (FKLGRKIGSG…LKRLFRDLFI (270 aa)) is the Protein kinase domain. ATP-binding positions include 15 to 23 (IGSGSFGEL) and Lys-38. Catalysis depends on Asp-128, which acts as the Proton acceptor. The segment at 300-471 (SSSGSSSRTR…RSLELLTLRK (172 aa)) is disordered. Over residues 325 to 339 (EKQERIAGKETRENR) the composition is skewed to basic and acidic residues. Residues 385-430 (SSRYGSSSRRAIPSSSRPSSAGGPSDSRSSSRLVTSTGGVGTVSNR) are compositionally biased toward low complexity. A compositionally biased stretch (polar residues) spans 431-449 (ASTSQRIQAGNESRTSSFS). Over residues 454–464 (NTREDPLRRSL) the composition is skewed to basic and acidic residues.

It belongs to the protein kinase superfamily. CK1 Ser/Thr protein kinase family. Casein kinase I subfamily. In terms of assembly, monomer. Post-translationally, autophosphorylated on serine, threonine and tyrosine residues. As to expression, expressed in leaves, stems and flowers.

The protein localises to the cytoplasm. It localises to the nucleus. It carries out the reaction L-seryl-[protein] + ATP = O-phospho-L-seryl-[protein] + ADP + H(+). The enzyme catalyses L-threonyl-[protein] + ATP = O-phospho-L-threonyl-[protein] + ADP + H(+). In terms of biological role, casein kinases are operationally defined by their preferential utilization of acidic proteins such as caseins as substrates. Can phosphorylate casein on serine and threonine residues, and poly(Glu,Tyr) in vitro. In Arabidopsis thaliana (Mouse-ear cress), this protein is Casein kinase 1-like protein 9.